The following is a 142-amino-acid chain: Large ribosomal subunit protein uL13 (142 aa).

It belongs to the universal ribosomal protein uL13 family. In terms of assembly, part of the 50S ribosomal subunit.

This protein is one of the early assembly proteins of the 50S ribosomal subunit, although it is not seen to bind rRNA by itself. It is important during the early stages of 50S assembly. The protein is Large ribosomal subunit protein uL13 of Thioalkalivibrio sulfidiphilus (strain HL-EbGR7).